The sequence spans 225 residues: Uracil-DNA glycosylase (225 aa).

The Proton acceptor role is filled by Asp-65.

The protein belongs to the uracil-DNA glycosylase (UDG) superfamily. UNG family.

It localises to the cytoplasm. It carries out the reaction Hydrolyzes single-stranded DNA or mismatched double-stranded DNA and polynucleotides, releasing free uracil.. Its function is as follows. Excises uracil residues from the DNA which can arise as a result of misincorporation of dUMP residues by DNA polymerase or due to deamination of cytosine. The polypeptide is Uracil-DNA glycosylase (Clostridium perfringens (strain 13 / Type A)).